Consider the following 272-residue polypeptide: Interleukin-2 receptor subunit alpha (272 aa).

An N-terminal signal peptide occupies residues 1 to 21 (MDPYLLMWGLLTFITVPGCQA). In terms of domain architecture, Sushi 1 spans 22-84 (ELCDDDPPKI…SWDNQCQCTS (63 aa)). The Extracellular portion of the chain corresponds to 22 to 240 (ELCDDDPPKI…ETFIFTTEYQ (219 aa)). 3 disulfide bridges follow: C24–C67, C49–C80, and C51–C82. N70 and N89 each carry an N-linked (GlcNAc...) asparagine glycan. A compositionally biased stretch (polar residues) spans 87–98 (ARNTTKQVTPQP). Positions 87 to 109 (ARNTTKQVTPQPEEQKERKTTEM) are disordered. Positions 123–186 (GHCREPPPWE…WTQPQLICTG (64 aa)) constitute a Sushi 2 domain. 2 disulfides stabilise this stretch: C125/C168 and C152/C184. The segment at 186–213 (GETEPSQFPGEEEPQASPDGLPESETSR) is disordered. Residues 241–259 (VAVAGCVFLLISVLLLSGL) form a helical membrane-spanning segment. Residues 260-272 (TWQRRQRKNRRTI) lie on the Cytoplasmic side of the membrane.

Non-covalent dimer of an alpha and a beta subunit. IL2R exists in 3 different forms: a high affinity dimer, an intermediate affinity monomer (beta subunit), and a low affinity monomer (alpha subunit). The high and intermediate affinity forms also associate with a gamma subunit.

Its subcellular location is the membrane. Receptor for interleukin-2. The receptor is involved in the regulation of immune tolerance by controlling regulatory T cells (TREGs) activity. TREGs suppress the activation and expansion of autoreactive T-cells. The protein is Interleukin-2 receptor subunit alpha (IL2RA) of Macaca mulatta (Rhesus macaque).